A 259-amino-acid polypeptide reads, in one-letter code: Enkurin (259 aa).

2 disordered regions span residues 1 to 26 (MVAM…EPPQ) and 76 to 98 (PPKK…TDHP). Positions 76–88 (PPKKKFEWNERRK) are enriched in basic and acidic residues. The short motif at 86-92 (RRKPPVP) is the SH3-binding element. The region spanning 163–255 (KRNEEVKKAQ…VLEKHKVIYI (93 aa)) is the Enkurin domain. The interaction with TRPC proteins stretch occupies residues 163 to 258 (KRNEEVKKAQ…KHKVIYIANK (96 aa)). The region spanning 179–190 (IQENLRKAAMKR) is the IQ domain.

Microtubule inner protein component of sperm flagellar doublet microtubules. Binds calmodulin via its IQ domain. Interacts with TRPC1, TRPC2, TRPC5, but not TRPC3. Interacts with CFAP45. Expressed in trachea multiciliated cells.

The protein localises to the cytoplasm. The protein resides in the cytoskeleton. It is found in the flagellum axoneme. It localises to the cilium axoneme. Its function is as follows. Adapter that functions to localize a calcium-sensitive signal transduction machinery in sperm to a calcium-permeable ion channel. Microtubule inner protein (MIP) part of the dynein-decorated doublet microtubules (DMTs) in cilia axoneme, which is required for motile cilia beating. The sequence is that of Enkurin (ENKUR) from Bos taurus (Bovine).